Reading from the N-terminus, the 712-residue chain is Saccharolysin (712 aa).

A Phosphoserine modification is found at serine 73. Histidine 501 lines the Zn(2+) pocket. Residue glutamate 502 is part of the active site. 2 residues coordinate Zn(2+): histidine 505 and histidine 508.

The protein belongs to the peptidase M3 family. Requires Zn(2+) as cofactor.

It is found in the cytoplasm. It catalyses the reaction Cleavage of Pro-|-Phe and Ala-|-Ala bonds.. Could be involved in late stage of protein degradation. In Saccharomyces cerevisiae (strain ATCC 204508 / S288c) (Baker's yeast), this protein is Saccharolysin (PRD1).